The sequence spans 549 residues: Probable glucomannan 4-beta-mannosyltransferase 4 (549 aa).

A helical transmembrane segment spans residues 35-55 (VAPVLQFAVWACMAMSVMLVL). The active site involves Asp-151. Positions 210 and 212 each coordinate substrate. The active site involves Asp-304. Transmembrane regions (helical) follow at residues 383–403 (VVAPILTFLFYCVVIPLSVMV), 406–426 (VSIPVWGMVYIPTAITIMNAI), 497–517 (IYIPELMVAFYLLVCASYDLV), and 523–543 (YYLYIYLQAFAFIALGFGFAG).

The protein belongs to the glycosyltransferase 2 family. Plant cellulose synthase-like A subfamily.

The protein resides in the golgi apparatus membrane. It catalyses the reaction GDP-mannose + (glucomannan)n = GDP + (glucomannan)n+1.. Functionally, probable mannan synthase which consists of a 4-beta-mannosyltransferase activity on mannan using GDP-mannose. The beta-1,4-mannan product is the backbone for galactomannan synthesis by galactomannan galactosyltransferase. Galactomannan is a noncellulosic polysaccharides of plant cell wall. In Oryza sativa subsp. japonica (Rice), this protein is Probable glucomannan 4-beta-mannosyltransferase 4.